Consider the following 527-residue polypeptide: CTP synthase (527 aa).

Residues 1-270 are amidoligase domain; it reads MKYIFVTGGV…ADVLCQLLQL (270 aa). S12 contacts CTP. S12 serves as a coordination point for UTP. ATP-binding positions include 13-18 and D70; that span reads GLGKGI. Mg(2+) contacts are provided by D70 and E145. CTP is bound by residues 152–154, 191–196, and K227; these read DIE and KTKPTQ. UTP-binding positions include 191–196 and K227; that span reads KTKPTQ. Positions 292-525 constitute a Glutamine amidotransferase type-1 domain; the sequence is TIGIVSKYGK…VEACLKNRGK (234 aa). G349 lines the L-glutamine pocket. C376 acts as the Nucleophile; for glutamine hydrolysis in catalysis. L-glutamine contacts are provided by residues 377 to 380, E400, and R455; that span reads LGFQ. Catalysis depends on residues H498 and E500.

It belongs to the CTP synthase family. As to quaternary structure, homotetramer.

It carries out the reaction UTP + L-glutamine + ATP + H2O = CTP + L-glutamate + ADP + phosphate + 2 H(+). The catalysed reaction is L-glutamine + H2O = L-glutamate + NH4(+). The enzyme catalyses UTP + NH4(+) + ATP = CTP + ADP + phosphate + 2 H(+). Its pathway is pyrimidine metabolism; CTP biosynthesis via de novo pathway; CTP from UDP: step 2/2. Its activity is regulated as follows. Allosterically activated by GTP, when glutamine is the substrate; GTP has no effect on the reaction when ammonia is the substrate. The allosteric effector GTP functions by stabilizing the protein conformation that binds the tetrahedral intermediate(s) formed during glutamine hydrolysis. Inhibited by the product CTP, via allosteric rather than competitive inhibition. Its function is as follows. Catalyzes the ATP-dependent amination of UTP to CTP with either L-glutamine or ammonia as the source of nitrogen. Regulates intracellular CTP levels through interactions with the four ribonucleotide triphosphates. In Methanospirillum hungatei JF-1 (strain ATCC 27890 / DSM 864 / NBRC 100397 / JF-1), this protein is CTP synthase.